The chain runs to 508 residues: Photosystem II CP47 reaction center protein (508 aa).

The next 6 helical transmembrane spans lie at 21-36 (AVHL…WAGS), 101-115 (IILS…IWHW), 140-156 (GIHL…FGAF), 203-218 (IAAG…FHLS), 237-252 (VLSS…AFVV), and 457-472 (IFAL…HGAR).

This sequence belongs to the PsbB/PsbC family. PsbB subfamily. In terms of assembly, PSII is composed of 1 copy each of membrane proteins PsbA, PsbB, PsbC, PsbD, PsbE, PsbF, PsbH, PsbI, PsbJ, PsbK, PsbL, PsbM, PsbT, PsbY, PsbZ, Psb30/Ycf12, at least 3 peripheral proteins of the oxygen-evolving complex and a large number of cofactors. It forms dimeric complexes. The cofactor is Binds multiple chlorophylls. PSII binds additional chlorophylls, carotenoids and specific lipids..

Its subcellular location is the plastid. The protein resides in the chloroplast thylakoid membrane. In terms of biological role, one of the components of the core complex of photosystem II (PSII). It binds chlorophyll and helps catalyze the primary light-induced photochemical processes of PSII. PSII is a light-driven water:plastoquinone oxidoreductase, using light energy to abstract electrons from H(2)O, generating O(2) and a proton gradient subsequently used for ATP formation. This Bigelowiella natans (Pedinomonas minutissima) protein is Photosystem II CP47 reaction center protein.